The sequence spans 243 residues: UPF0758 protein Tery_2667 (243 aa).

In terms of domain architecture, MPN spans 113–235 (VVESPQAAAD…HSSLRQITNL (123 aa)). Zn(2+) contacts are provided by His184, His186, and Asp197. The short motif at 184–197 (HNHPSGNVEPSPED) is the JAMM motif element.

Belongs to the UPF0758 family.

This Trichodesmium erythraeum (strain IMS101) protein is UPF0758 protein Tery_2667.